The sequence spans 812 residues: Phospholipase D alpha 1 (812 aa).

Residues 1-130 (MAQILLHGTL…LGGEEIDKWL (130 aa)) enclose the C2 domain. A Ca(2+)-binding site is contributed by aspartate 190. In terms of domain architecture, PLD phosphodiesterase 1 spans 330–368 (TMFTHHQKIVVVDHEMPNQGSQQRRIVSFIGGIDLCDGR). Residues histidine 335, lysine 337, and aspartate 342 contribute to the active site. An a 1,2-diacyl-sn-glycero-3-phosphate-binding site is contributed by histidine 335. Histidine 374 and histidine 408 together coordinate Ca(2+). Positions 524 and 663 each coordinate a 1,2-diacyl-sn-glycero-3-phosphate. The region spanning 658-685 (FMIYVHTKMMIVDDEYIIIGSANINQRS) is the PLD phosphodiesterase 2 domain. Catalysis depends on residues histidine 663, lysine 665, and aspartate 670. Glutamate 724 is a Ca(2+) binding site.

The protein belongs to the phospholipase D family. C2-PLD subfamily. Monomer. It depends on Ca(2+) as a cofactor.

It catalyses the reaction a 1,2-diacyl-sn-glycero-3-phosphocholine + H2O = a 1,2-diacyl-sn-glycero-3-phosphate + choline + H(+). Functionally, hydrolyzes glycerol-phospholipids at the terminal phosphodiesteric bond. Plays an important role in various cellular processes. In Zea mays (Maize), this protein is Phospholipase D alpha 1 (PLD1).